The chain runs to 250 residues: Leucyl/phenylalanyl-tRNA--protein transferase (250 aa).

The interval 1 to 21 (MTPFRRPTVLGTSASAPFPPA) is disordered.

The protein belongs to the L/F-transferase family.

It localises to the cytoplasm. It catalyses the reaction N-terminal L-lysyl-[protein] + L-leucyl-tRNA(Leu) = N-terminal L-leucyl-L-lysyl-[protein] + tRNA(Leu) + H(+). The enzyme catalyses N-terminal L-arginyl-[protein] + L-leucyl-tRNA(Leu) = N-terminal L-leucyl-L-arginyl-[protein] + tRNA(Leu) + H(+). The catalysed reaction is L-phenylalanyl-tRNA(Phe) + an N-terminal L-alpha-aminoacyl-[protein] = an N-terminal L-phenylalanyl-L-alpha-aminoacyl-[protein] + tRNA(Phe). Its function is as follows. Functions in the N-end rule pathway of protein degradation where it conjugates Leu, Phe and, less efficiently, Met from aminoacyl-tRNAs to the N-termini of proteins containing an N-terminal arginine or lysine. The sequence is that of Leucyl/phenylalanyl-tRNA--protein transferase from Xanthomonas euvesicatoria pv. vesicatoria (strain 85-10) (Xanthomonas campestris pv. vesicatoria).